A 622-amino-acid chain; its full sequence is 1-deoxy-D-xylulose-5-phosphate synthase (622 aa).

Residues His-80 and 121 to 123 (GHS) contribute to the thiamine diphosphate site. Asp-152 contributes to the Mg(2+) binding site. Thiamine diphosphate is bound by residues 153 to 154 (GA), Asn-181, Tyr-288, and Glu-370. A Mg(2+)-binding site is contributed by Asn-181.

Belongs to the transketolase family. DXPS subfamily. In terms of assembly, homodimer. Mg(2+) serves as cofactor. Requires thiamine diphosphate as cofactor.

The enzyme catalyses D-glyceraldehyde 3-phosphate + pyruvate + H(+) = 1-deoxy-D-xylulose 5-phosphate + CO2. It functions in the pathway metabolic intermediate biosynthesis; 1-deoxy-D-xylulose 5-phosphate biosynthesis; 1-deoxy-D-xylulose 5-phosphate from D-glyceraldehyde 3-phosphate and pyruvate: step 1/1. In terms of biological role, catalyzes the acyloin condensation reaction between C atoms 2 and 3 of pyruvate and glyceraldehyde 3-phosphate to yield 1-deoxy-D-xylulose-5-phosphate (DXP). This Hamiltonella defensa subsp. Acyrthosiphon pisum (strain 5AT) protein is 1-deoxy-D-xylulose-5-phosphate synthase.